The sequence spans 473 residues: Cysteine--tRNA ligase (473 aa).

Cys30 serves as a coordination point for Zn(2+). Positions 32 to 42 (MTVYDYCHIGH) match the 'HIGH' region motif. Cys213, His238, and Glu242 together coordinate Zn(2+). The 'KMSKS' region signature appears at 270–274 (KMSKS). Residue Lys273 coordinates ATP.

It belongs to the class-I aminoacyl-tRNA synthetase family. In terms of assembly, monomer. It depends on Zn(2+) as a cofactor.

The protein localises to the cytoplasm. The catalysed reaction is tRNA(Cys) + L-cysteine + ATP = L-cysteinyl-tRNA(Cys) + AMP + diphosphate. The protein is Cysteine--tRNA ligase of Acinetobacter baumannii (strain AB307-0294).